The chain runs to 157 residues: MLSQHTQARIEQLAATLGLYIYDIDFFKEDNRPILRVSITRKAPMQKQDCKNGLAVSLQDCQNVSELISPLLDVEDENLKDYNLEVSSPGLERVLKKPQHYIYSLGEKVSIKLMDKSVIEGILHDVNENVSISIDTGKEILSFSFADMKKIKVVFEL.

Belongs to the RimP family.

Its subcellular location is the cytoplasm. Its function is as follows. Required for maturation of 30S ribosomal subunits. The polypeptide is Ribosome maturation factor RimP (Helicobacter hepaticus (strain ATCC 51449 / 3B1)).